Consider the following 156-residue polypeptide: ATP synthase subunit b (156 aa).

Residues valine 12–alanine 32 traverse the membrane as a helical segment.

Belongs to the ATPase B chain family. F-type ATPases have 2 components, F(1) - the catalytic core - and F(0) - the membrane proton channel. F(1) has five subunits: alpha(3), beta(3), gamma(1), delta(1), epsilon(1). F(0) has three main subunits: a(1), b(2) and c(10-14). The alpha and beta chains form an alternating ring which encloses part of the gamma chain. F(1) is attached to F(0) by a central stalk formed by the gamma and epsilon chains, while a peripheral stalk is formed by the delta and b chains.

The protein localises to the cell inner membrane. In terms of biological role, f(1)F(0) ATP synthase produces ATP from ADP in the presence of a proton or sodium gradient. F-type ATPases consist of two structural domains, F(1) containing the extramembraneous catalytic core and F(0) containing the membrane proton channel, linked together by a central stalk and a peripheral stalk. During catalysis, ATP synthesis in the catalytic domain of F(1) is coupled via a rotary mechanism of the central stalk subunits to proton translocation. Its function is as follows. Component of the F(0) channel, it forms part of the peripheral stalk, linking F(1) to F(0). The chain is ATP synthase subunit b from Pseudomonas putida (strain ATCC 700007 / DSM 6899 / JCM 31910 / BCRC 17059 / LMG 24140 / F1).